Reading from the N-terminus, the 176-residue chain is Large ribosomal subunit protein uL6 (176 aa).

The segment covering 153–170 (PEPYKGKGIRYGDEEVRR) has biased composition (basic and acidic residues). The segment at 153-176 (PEPYKGKGIRYGDEEVRRKEAKKK) is disordered.

This sequence belongs to the universal ribosomal protein uL6 family. Part of the 50S ribosomal subunit.

Its function is as follows. This protein binds to the 23S rRNA, and is important in its secondary structure. It is located near the subunit interface in the base of the L7/L12 stalk, and near the tRNA binding site of the peptidyltransferase center. This Chromohalobacter salexigens (strain ATCC BAA-138 / DSM 3043 / CIP 106854 / NCIMB 13768 / 1H11) protein is Large ribosomal subunit protein uL6.